A 237-amino-acid chain; its full sequence is LexA repressor (237 aa).

The H-T-H motif DNA-binding region spans 26–46 (FDEMKEALDLRSKSGIHRLIT). A disordered region spans residues 84–110 (GFSPSVIEGGAQPKPSSRDLAPARSSG). Active-site for autocatalytic cleavage activity residues include S158 and K196.

It belongs to the peptidase S24 family. As to quaternary structure, homodimer.

The enzyme catalyses Hydrolysis of Ala-|-Gly bond in repressor LexA.. In terms of biological role, represses a number of genes involved in the response to DNA damage (SOS response), including recA and lexA. In the presence of single-stranded DNA, RecA interacts with LexA causing an autocatalytic cleavage which disrupts the DNA-binding part of LexA, leading to derepression of the SOS regulon and eventually DNA repair. The chain is LexA repressor from Parvibaculum lavamentivorans (strain DS-1 / DSM 13023 / NCIMB 13966).